We begin with the raw amino-acid sequence, 148 residues long: Hemoglobin subunit beta (148 aa).

The Globin domain maps to 3 to 148; it reads XWTDXERAAI…VVSALGRQYH (146 aa). The heme b site is built by His-64 and His-93.

Belongs to the globin family. Heterotetramer of two alpha chains and two beta chains. Red blood cells.

Its function is as follows. Involved in oxygen transport from gills to the various peripheral tissues. The protein is Hemoglobin subunit beta (hbb) of Decapterus maruadsi (Japanese scad).